The primary structure comprises 149 residues: 3-hydroxyacyl-[acyl-carrier-protein] dehydratase FabZ (149 aa).

The active site involves H53.

Belongs to the thioester dehydratase family. FabZ subfamily.

The protein resides in the cytoplasm. The enzyme catalyses a (3R)-hydroxyacyl-[ACP] = a (2E)-enoyl-[ACP] + H2O. Its function is as follows. Involved in unsaturated fatty acids biosynthesis. Catalyzes the dehydration of short chain beta-hydroxyacyl-ACPs and long chain saturated and unsaturated beta-hydroxyacyl-ACPs. This chain is 3-hydroxyacyl-[acyl-carrier-protein] dehydratase FabZ, found in Neisseria gonorrhoeae (strain ATCC 700825 / FA 1090).